Here is a 452-residue protein sequence, read N- to C-terminus: UPF0210 protein Daud_1353 (452 aa).

This sequence belongs to the UPF0210 family. In terms of assembly, homodimer.

This chain is UPF0210 protein Daud_1353, found in Desulforudis audaxviator (strain MP104C).